The sequence spans 447 residues: Phosphoglucosamine mutase (447 aa).

Catalysis depends on Ser-100, which acts as the Phosphoserine intermediate. Residues Ser-100, Asp-240, Asp-242, and Asp-244 each coordinate Mg(2+). Ser-100 is subject to Phosphoserine.

The protein belongs to the phosphohexose mutase family. Mg(2+) serves as cofactor. In terms of processing, activated by phosphorylation.

It catalyses the reaction alpha-D-glucosamine 1-phosphate = D-glucosamine 6-phosphate. In terms of biological role, catalyzes the conversion of glucosamine-6-phosphate to glucosamine-1-phosphate. The polypeptide is Phosphoglucosamine mutase (Clostridium botulinum (strain Eklund 17B / Type B)).